The primary structure comprises 267 residues: Dynein axonemal assembly factor 19 homolog (267 aa).

Disordered stretches follow at residues 86 to 111 and 226 to 250; these read ISQS…RDWR and HQGK…VDPC.

It belongs to the DNAAF19/PR46b family. As to quaternary structure, homodimer.

The protein localises to the cytoplasm. It is found in the cell projection. The protein resides in the cilium. It localises to the flagellum. Its function is as follows. Dynein-attachment factor required for cilia motility. The chain is Dynein axonemal assembly factor 19 homolog (PR46b) from Chlamydomonas reinhardtii (Chlamydomonas smithii).